A 163-amino-acid chain; its full sequence is Acetolactate synthase isozyme 3 small subunit (163 aa).

The ACT domain occupies 4-78 (ILSVLLENES…DVLRVSELGQ (75 aa)).

This sequence belongs to the acetolactate synthase small subunit family. As to quaternary structure, dimer of large and small chains.

It carries out the reaction 2 pyruvate + H(+) = (2S)-2-acetolactate + CO2. It participates in amino-acid biosynthesis; L-isoleucine biosynthesis; L-isoleucine from 2-oxobutanoate: step 1/4. The protein operates within amino-acid biosynthesis; L-valine biosynthesis; L-valine from pyruvate: step 1/4. With respect to regulation, sensitive to valine inhibition. This chain is Acetolactate synthase isozyme 3 small subunit (ilvH), found in Salmonella typhimurium (strain LT2 / SGSC1412 / ATCC 700720).